The chain runs to 256 residues: Thiazole synthase (256 aa).

The active-site Schiff-base intermediate with DXP is K98. Residues G159, 185–186 (AG), and 207–208 (NT) contribute to the 1-deoxy-D-xylulose 5-phosphate site.

This sequence belongs to the ThiG family. In terms of assembly, homotetramer. Forms heterodimers with either ThiH or ThiS.

Its subcellular location is the cytoplasm. The enzyme catalyses [ThiS sulfur-carrier protein]-C-terminal-Gly-aminoethanethioate + 2-iminoacetate + 1-deoxy-D-xylulose 5-phosphate = [ThiS sulfur-carrier protein]-C-terminal Gly-Gly + 2-[(2R,5Z)-2-carboxy-4-methylthiazol-5(2H)-ylidene]ethyl phosphate + 2 H2O + H(+). It participates in cofactor biosynthesis; thiamine diphosphate biosynthesis. Functionally, catalyzes the rearrangement of 1-deoxy-D-xylulose 5-phosphate (DXP) to produce the thiazole phosphate moiety of thiamine. Sulfur is provided by the thiocarboxylate moiety of the carrier protein ThiS. In vitro, sulfur can be provided by H(2)S. This chain is Thiazole synthase, found in Aliivibrio salmonicida (strain LFI1238) (Vibrio salmonicida (strain LFI1238)).